A 121-amino-acid chain; its full sequence is Large ribosomal subunit protein eL8 (121 aa).

It belongs to the eukaryotic ribosomal protein eL8 family. Part of the 50S ribosomal subunit. Probably part of the RNase P complex.

The protein resides in the cytoplasm. Its function is as follows. Multifunctional RNA-binding protein that recognizes the K-turn motif in ribosomal RNA, the RNA component of RNase P, box H/ACA, box C/D and box C'/D' sRNAs. This Thermoplasma acidophilum (strain ATCC 25905 / DSM 1728 / JCM 9062 / NBRC 15155 / AMRC-C165) protein is Large ribosomal subunit protein eL8.